Consider the following 1087-residue polypeptide: Synaptopodin-2 (1087 aa).

The PDZ domain maps to 6-88 (FICISMTGGA…SLHLLVKRPS (83 aa)). Disordered stretches follow at residues 24 to 52 (GKEE…EGDE), 88 to 112 (SSGT…HEGP), and 207 to 272 (GPIV…AGLP). Residues 101–112 (TTNHQHLTHEGP) are compositionally biased toward basic and acidic residues. 2 stretches are compositionally biased toward polar residues: residues 207-230 (GPIV…SQLE) and 246-255 (TSLTSSTSSG). 3 positions are modified to phosphoserine: Ser300, Ser319, and Ser320. Positions 320–359 (SEGTEHGEDQRSGKDQSRPHKHRARHARLRRSESLSEKQV) are disordered. Over residues 322-337 (GTEHGEDQRSGKDQSR) the composition is skewed to basic and acidic residues. The residue at position 323 (Thr323) is a Phosphothreonine. Residues 338 to 348 (PHKHRARHARL) show a composition bias toward basic residues. Basic and acidic residues predominate over residues 349-359 (RRSESLSEKQV). Residues 388 to 396 (KKRRRRARK) carry the Nuclear localization signal motif. A phosphoserine mark is found at Ser540, Ser541, Ser543, and Ser546. Residues 551–557 (RSLASVP) are interaction with YWHAB. Ser555 is modified (phosphoserine; by PKA). 2 disordered regions span residues 581-817 (AKPF…ALNL) and 832-863 (NYTP…GMSG). Position 596 is a phosphoserine (Ser596). Residues 599–804 (RSVTSPISDF…AVSSIKIAQP (206 aa)) form an interaction with YWHAB region. Thr602 is subject to Phosphothreonine; by PKA and CaMK2. Ser603 is subject to Phosphoserine. 2 stretches are compositionally biased toward pro residues: residues 609 to 622 (PAPP…PPPE) and 636 to 647 (AQPPPWPQPAPW). The PPPY motif motif lies at 611–614 (PPPY). Tyr614 carries the phosphotyrosine modification. The residue at position 618 (Ser618) is a Phosphoserine. An F-actin binding region spans residues 656 to 796 (SEQIASRDER…PPNPPQVTAV (141 aa)). Positions 656–909 (SEQIASRDER…LPASWKYSSN (254 aa)) are F-actin bundling activity. 2 interaction with ACTN2 regions span residues 656–917 (SEQI…PPVA) and 894–1087 (QSPT…VVEE). Residues Ser697 and Ser719 each carry the phosphoserine modification. An actin binding region spans residues 740–893 (AKQKTPPPVA…DTVQAHTVRA (154 aa)). Residue Thr744 is modified to Phosphothreonine. Residues 751–777 (KPAVKSPSSSQPVAPVSPVWSPGVAPA) are compositionally biased toward low complexity. Residues Ser767 and Ser771 each carry the phosphoserine modification. A compositionally biased stretch (polar residues) spans 781-797 (AFSTSNPPNPPQVTAVS). The tract at residues 803-1087 (QPAAPPARPA…QVWKPSVVEE (285 aa)) is interaction with FLNC. Residues Ser895, Ser899, and Ser903 each carry the phosphoserine modification. Disordered regions lie at residues 930–952 (AIKS…KKPL), 970–1012 (FTFQ…PTNA), and 1037–1060 (PVSA…STSY). The interval 993–1012 (PAMKQALPPRQANVGSPTNA) is interaction with ZYX. Phosphoserine is present on residues Ser1008 and Ser1050. A compositionally biased stretch (low complexity) spans 1037 to 1051 (PVSASPVPVSVPTSP).

It belongs to the synaptopodin family. May self-associate in muscle cells under oxidative stress. Binds F-actin. Interacts with ACTN2; ACTN2 is proposed to anchor SYOP2 at Z lines in mature myocytes. Interacts with AKAP6, PPP3CA and CAMK2A. Interacts (phosphorylated form) with YWHAB; YWHAB competes with ACTN2 for interaction with SYNPO2. Interacts with KPNA2; mediating nuclear import of SYNOP2; dependent on interaction with YWHAB. Interacts with IPO13; may be implicated in SYNOP2 nuclear import. Interacts with ZYX, FLNC, ILK. Interacts with BAG3 (via WW 1 domain). May associate with the CASA complex consisting of HSPA8, HSPB8 and BAG3. Interacts with VPS18. Phosphorylated by PKA, and by CaMK2 at multiple sites. Dephosphorylated by calcineurin at Ser-555 and Thr-602; abrogating interaction with YWHAB and impairing nuclear import. Expressed in skeletal muscle, heart, colon, stomach, uterus and lung. Expression is restricted to muscle cell layers in colon, uterus and stomach.

It localises to the nucleus. It is found in the cytoplasm. Its subcellular location is the myofibril. The protein localises to the sarcomere. The protein resides in the z line. It localises to the cell junction. It is found in the focal adhesion. Functionally, has an actin-binding and actin-bundling activity. Can induce the formation of F-actin networks. At the sarcomeric Z lines is proposed to act as adapter protein that links nascent myofibers to the sarcolemma via ZYX and may play a role in early assembly and stabilization of the Z lines. Involved in autophagosome formation. May play a role in chaperone-assisted selective autophagy (CASA) involved in Z lines maintenance in striated muscle under mechanical tension; may link the client-processing CASA chaperone machinery to a membrane-tethering and fusion complex providing autophagosome membranes. Involved in regulation of cell migration. May be a tumor suppressor. This Mus musculus (Mouse) protein is Synaptopodin-2 (Synpo2).